A 412-amino-acid polypeptide reads, in one-letter code: Serine hydroxymethyltransferase (412 aa).

(6S)-5,6,7,8-tetrahydrofolate contacts are provided by residues L117 and 121-123 (GHL). At K226 the chain carries N6-(pyridoxal phosphate)lysine.

Belongs to the SHMT family. Homodimer. It depends on pyridoxal 5'-phosphate as a cofactor.

The protein localises to the cytoplasm. The catalysed reaction is (6R)-5,10-methylene-5,6,7,8-tetrahydrofolate + glycine + H2O = (6S)-5,6,7,8-tetrahydrofolate + L-serine. It participates in one-carbon metabolism; tetrahydrofolate interconversion. It functions in the pathway amino-acid biosynthesis; glycine biosynthesis; glycine from L-serine: step 1/1. Functionally, catalyzes the reversible interconversion of serine and glycine with tetrahydrofolate (THF) serving as the one-carbon carrier. This reaction serves as the major source of one-carbon groups required for the biosynthesis of purines, thymidylate, methionine, and other important biomolecules. Also exhibits THF-independent aldolase activity toward beta-hydroxyamino acids, producing glycine and aldehydes, via a retro-aldol mechanism. This chain is Serine hydroxymethyltransferase, found in Symbiobacterium thermophilum (strain DSM 24528 / JCM 14929 / IAM 14863 / T).